Reading from the N-terminus, the 290-residue chain is Ribosomal RNA small subunit methyltransferase A (290 aa).

Positions 27, 29, 54, 75, 100, and 125 each coordinate S-adenosyl-L-methionine.

This sequence belongs to the class I-like SAM-binding methyltransferase superfamily. rRNA adenine N(6)-methyltransferase family. RsmA subfamily.

It is found in the cytoplasm. It carries out the reaction adenosine(1518)/adenosine(1519) in 16S rRNA + 4 S-adenosyl-L-methionine = N(6)-dimethyladenosine(1518)/N(6)-dimethyladenosine(1519) in 16S rRNA + 4 S-adenosyl-L-homocysteine + 4 H(+). Specifically dimethylates two adjacent adenosines (A1518 and A1519) in the loop of a conserved hairpin near the 3'-end of 16S rRNA in the 30S particle. May play a critical role in biogenesis of 30S subunits. The protein is Ribosomal RNA small subunit methyltransferase A of Streptococcus pyogenes serotype M5 (strain Manfredo).